A 300-amino-acid chain; its full sequence is Meiotically up-regulated gene 165 protein (300 aa).

Disordered regions lie at residues 1–38 (MLEKGEHIEYPNTPPLHSPPESHTFSSQTDDSYFHKPS) and 50–109 (TNSS…STLE). The segment covering 21–38 (ESHTFSSQTDDSYFHKPS) has biased composition (polar residues). Low complexity predominate over residues 52-69 (SSVPSASRSPESIASSQS). A compositionally biased stretch (basic residues) spans 94-103 (TLRKRGRKPK).

It is found in the nucleus. In terms of biological role, has a role in meiosis. The polypeptide is Meiotically up-regulated gene 165 protein (mug165) (Schizosaccharomyces pombe (strain 972 / ATCC 24843) (Fission yeast)).